Consider the following 466-residue polypeptide: Hydroxyacid-oxoacid transhydrogenase, mitochondrial (466 aa).

Lys444 is subject to N6-acetyllysine. Ser451 carries the post-translational modification Phosphoserine.

The protein belongs to the iron-containing alcohol dehydrogenase family. Hydroxyacid-oxoacid transhydrogenase subfamily.

The protein resides in the mitochondrion. It carries out the reaction (S)-3-hydroxybutanoate + 2-oxoglutarate = (R)-2-hydroxyglutarate + acetoacetate. The catalysed reaction is 4-hydroxybutanoate + 2-oxoglutarate = (R)-2-hydroxyglutarate + succinate semialdehyde. In terms of biological role, catalyzes the cofactor-independent reversible oxidation of gamma-hydroxybutyrate (GHB) to succinic semialdehyde (SSA) coupled to reduction of 2-ketoglutarate (2-KG) to D-2-hydroxyglutarate (D-2-HG). L-3-hydroxybutyrate (L-3-OHB) is also a substrate for HOT when using 2-KG as hydrogen acceptor, resulting in the formation of D-2-HG. The protein is Hydroxyacid-oxoacid transhydrogenase, mitochondrial (ADHFE1) of Bos taurus (Bovine).